The sequence spans 136 residues: Large ribosomal subunit protein uL22 (136 aa).

The protein belongs to the universal ribosomal protein uL22 family. In terms of assembly, part of the 50S ribosomal subunit.

Its function is as follows. This protein binds specifically to 23S rRNA; its binding is stimulated by other ribosomal proteins, e.g. L4, L17, and L20. It is important during the early stages of 50S assembly. It makes multiple contacts with different domains of the 23S rRNA in the assembled 50S subunit and ribosome. The globular domain of the protein is located near the polypeptide exit tunnel on the outside of the subunit, while an extended beta-hairpin is found that lines the wall of the exit tunnel in the center of the 70S ribosome. The polypeptide is Large ribosomal subunit protein uL22 (Parabacteroides distasonis (strain ATCC 8503 / DSM 20701 / CIP 104284 / JCM 5825 / NCTC 11152)).